A 137-amino-acid chain; its full sequence is Large ribosomal subunit protein uL24 (137 aa).

This sequence belongs to the universal ribosomal protein uL24 family. As to quaternary structure, part of the 50S ribosomal subunit.

In terms of biological role, one of two assembly initiator proteins, it binds directly to the 5'-end of the 23S rRNA, where it nucleates assembly of the 50S subunit. Located at the polypeptide exit tunnel on the outside of the subunit. The polypeptide is Large ribosomal subunit protein uL24 (Sulfurisphaera tokodaii (strain DSM 16993 / JCM 10545 / NBRC 100140 / 7) (Sulfolobus tokodaii)).